A 266-amino-acid chain; its full sequence is Chymotrypsin-like elastase family member 1 (266 aa).

Positions 1–16 (MLRFLVFASLVLYGHS) are cleaved as a signal peptide. Positions 17 to 26 (TQDFPETNAR) are cleaved as a propeptide — activation peptide. The Peptidase S1 domain maps to 27–264 (VVGGAEARRN…YISWMNNVIA (238 aa)). A disulfide bridge connects residues Cys56 and Cys72. Residue His71 is the Charge relay system of the active site. Ca(2+) contacts are provided by Asp85, Asn87, Gln90, and Glu95. Asp119 functions as the Charge relay system in the catalytic mechanism. 3 cysteine pairs are disulfide-bonded: Cys153–Cys220, Cys184–Cys200, and Cys210–Cys240. Ser214 functions as the Charge relay system in the catalytic mechanism.

Belongs to the peptidase S1 family. Elastase subfamily. Requires Ca(2+) as cofactor. As to expression, pancreas.

It localises to the secreted. It carries out the reaction Hydrolysis of proteins, including elastin. Preferential cleavage: Ala-|-Xaa.. Serine proteases that hydrolyze many proteins in addition to elastin. The sequence is that of Chymotrypsin-like elastase family member 1 (Cela1) from Rattus norvegicus (Rat).